A 507-amino-acid chain; its full sequence is ATP synthase subunit alpha, chloroplastic (507 aa).

Position 170-177 (170-177 (GDRQTGKT)) interacts with ATP.

It belongs to the ATPase alpha/beta chains family. As to quaternary structure, F-type ATPases have 2 components, CF(1) - the catalytic core - and CF(0) - the membrane proton channel. CF(1) has five subunits: alpha(3), beta(3), gamma(1), delta(1), epsilon(1). CF(0) has four main subunits: a, b, b' and c.

Its subcellular location is the plastid. It localises to the chloroplast thylakoid membrane. The enzyme catalyses ATP + H2O + 4 H(+)(in) = ADP + phosphate + 5 H(+)(out). Functionally, produces ATP from ADP in the presence of a proton gradient across the membrane. The alpha chain is a regulatory subunit. The chain is ATP synthase subunit alpha, chloroplastic from Panax ginseng (Korean ginseng).